Here is a 453-residue protein sequence, read N- to C-terminus: Vacuolar cation/proton exchanger 1b (453 aa).

Residues 1-67 (MPVSRMMMES…LRSLLANLND (67 aa)) are Cytoplasmic-facing. The helical transmembrane segment at 68–85 (VLLTTRLFLLFPAVLLAI) threads the bilayer. Residues 86–91 (AATYLH) lie on the Extracellular side of the membrane. Residues 92–109 (FGQVWVFVLSLIGLVPLA) form a helical membrane-spanning segment. Topologically, residues 110–126 (ERLSFLTEQIAFYTGPT) are cytoplasmic. The chain crosses the membrane as a helical span at residues 127-147 (VGGLLNATFGNVTEVIIALLA). The interval 136–171 (GNVTEVIIALLALREGKIEVVKCSLLGSILSNLLLV) is cation selection. At 148–160 (LREGKIEVVKCSL) the chain is on the extracellular side. Residues 161-181 (LGSILSNLLLVLGTSLFLAGI) traverse the membrane as a helical segment. Over 182–194 (ANLRAHQPYDTKQ) the chain is Cytoplasmic. Residues 195 to 215 (AHVNTALLMLAVLCHSLPLML) form a helical membrane-spanning segment. Topologically, residues 216 to 232 (RYAVTSGDHAIVSGDAA) are extracellular. The helical transmembrane segment at 233 to 253 (LHLSRACSILMLIAYLAYLFF) threads the bilayer. Over 254–283 (QLNTHRQLFEPQQVEDDDDDDLVIAQDDEP) the chain is Cytoplasmic. A helical transmembrane segment spans residues 284–304 (VLGFSSAMIWLALMTLLTALL). Residues 305–327 (SGYVVSTIEAASESWELSVSFIS) lie on the Extracellular side of the membrane. Residues 328-348 (IILLPIVGNAAEHAGAVIFAL) traverse the membrane as a helical segment. Positions 335–370 (GNAAEHAGAVIFALKNKMDITLGVSLGSATQISMFV) are cation selection. The Cytoplasmic portion of the chain corresponds to 349 to 364 (KNKMDITLGVSLGSAT). Residues 365 to 385 (QISMFVVPVSVIVAWTMGIPM) traverse the membrane as a helical segment. Topologically, residues 386-388 (DLD) are extracellular. A helical membrane pass occupies residues 389–409 (FNLLETGSLFLAILVTAFTLQ). Residues 410 to 414 (EGESH) are Cytoplasmic-facing. Residues 415–435 (YLKGLILVLCYAVISVCFFVI) form a helical membrane-spanning segment. At 436-453 (RRRSAGGTDGVHHLDVIV) the chain is on the extracellular side.

Belongs to the Ca(2+):cation antiporter (CaCA) (TC 2.A.19) family. Cation/proton exchanger (CAX) subfamily. In terms of tissue distribution, expressed in embryo and roots.

It localises to the vacuole membrane. Functionally, vacuolar cation/proton exchanger (CAX). Translocates Ca(2+) and other metal ions into vacuoles using the proton gradient formed by H(+)-ATPase and H(+)-pyrophosphatase. The protein is Vacuolar cation/proton exchanger 1b (CAX1b) of Oryza sativa subsp. japonica (Rice).